Reading from the N-terminus, the 444-residue chain is Probable glycine dehydrogenase (decarboxylating) subunit 1 (444 aa).

Belongs to the GcvP family. N-terminal subunit subfamily. In terms of assembly, the glycine cleavage system is composed of four proteins: P, T, L and H. In this organism, the P 'protein' is a heterodimer of two subunits.

It carries out the reaction N(6)-[(R)-lipoyl]-L-lysyl-[glycine-cleavage complex H protein] + glycine + H(+) = N(6)-[(R)-S(8)-aminomethyldihydrolipoyl]-L-lysyl-[glycine-cleavage complex H protein] + CO2. The glycine cleavage system catalyzes the degradation of glycine. The P protein binds the alpha-amino group of glycine through its pyridoxal phosphate cofactor; CO(2) is released and the remaining methylamine moiety is then transferred to the lipoamide cofactor of the H protein. The chain is Probable glycine dehydrogenase (decarboxylating) subunit 1 from Carboxydothermus hydrogenoformans (strain ATCC BAA-161 / DSM 6008 / Z-2901).